The sequence spans 463 residues: Probable Xaa-Pro aminopeptidase pepP (463 aa).

Residues aspartate 259, aspartate 270, glutamate 393, and glutamate 433 each contribute to the Mn(2+) site.

Belongs to the peptidase M24B family. The cofactor is Mn(2+).

The enzyme catalyses Release of any N-terminal amino acid, including proline, that is linked to proline, even from a dipeptide or tripeptide.. In terms of biological role, catalyzes the removal of a penultimate prolyl residue from the N-termini of peptides. In Pyrenophora tritici-repentis (strain Pt-1C-BFP) (Wheat tan spot fungus), this protein is Probable Xaa-Pro aminopeptidase pepP (pepP).